Consider the following 186-residue polypeptide: Glutathione peroxidase 7 (186 aa).

A signal peptide spans 1–18 (MVAARAAAWLLLAAAACA). Residue Cys56 is part of the active site.

Belongs to the glutathione peroxidase family.

The protein localises to the secreted. It catalyses the reaction 2 glutathione + H2O2 = glutathione disulfide + 2 H2O. The polypeptide is Glutathione peroxidase 7 (GPX7) (Bos taurus (Bovine)).